A 231-amino-acid chain; its full sequence is SrfA-induced gene F protein (231 aa).

The sequence is that of SrfA-induced gene F protein (sigF) from Dictyostelium discoideum (Social amoeba).